Here is a 438-residue protein sequence, read N- to C-terminus: Putative F-box/FBD/LRR-repeat protein At2g05300 (438 aa).

The 47-residue stretch at 13–59 (EDRISQLPDPLLTQILNLLPTEEAVKTSVLSTRWRTLWLWVPNLELS) folds into the F-box domain. LRR repeat units lie at residues 135–166 (CDSL…RLKD), 167–192 (IVFH…KIDV), 235–261 (CLII…DISL), and 318–346 (YVTL…ILER). An FBD domain is found at 362–409 (SMSSVPECLLTSLEFVEFKAPICGLGPEMMLVWYFLKNSPTLKKLTLP).

The polypeptide is Putative F-box/FBD/LRR-repeat protein At2g05300 (Arabidopsis thaliana (Mouse-ear cress)).